The following is a 168-amino-acid chain: ATP synthase subunit b (168 aa).

The helical transmembrane segment at 9–29 (SIPFGTIAYTLFIFLLLLVML) threads the bilayer.

This sequence belongs to the ATPase B chain family. In terms of assembly, F-type ATPases have 2 components, F(1) - the catalytic core - and F(0) - the membrane proton channel. F(1) has five subunits: alpha(3), beta(3), gamma(1), delta(1), epsilon(1). F(0) has three main subunits: a(1), b(2) and c(10-14). The alpha and beta chains form an alternating ring which encloses part of the gamma chain. F(1) is attached to F(0) by a central stalk formed by the gamma and epsilon chains, while a peripheral stalk is formed by the delta and b chains.

The protein resides in the cell membrane. Its function is as follows. F(1)F(0) ATP synthase produces ATP from ADP in the presence of a proton or sodium gradient. F-type ATPases consist of two structural domains, F(1) containing the extramembraneous catalytic core and F(0) containing the membrane proton channel, linked together by a central stalk and a peripheral stalk. During catalysis, ATP synthesis in the catalytic domain of F(1) is coupled via a rotary mechanism of the central stalk subunits to proton translocation. Functionally, component of the F(0) channel, it forms part of the peripheral stalk, linking F(1) to F(0). The chain is ATP synthase subunit b from Bacillus cereus (strain B4264).